Reading from the N-terminus, the 203-residue chain is Glycerol-3-phosphate acyltransferase 1 (203 aa).

6 helical membrane-spanning segments follow: residues 2-22 (LNFF…SHII), 52-72 (GFPA…FFVW), 82-102 (VIAF…FLKF), 117-137 (VLTK…FSIL), 150-168 (EDAF…YTMW), and 170-190 (VFNG…IVFY).

The protein belongs to the PlsY family. As to quaternary structure, probably interacts with PlsX.

The protein localises to the cell inner membrane. It catalyses the reaction an acyl phosphate + sn-glycerol 3-phosphate = a 1-acyl-sn-glycero-3-phosphate + phosphate. The protein operates within lipid metabolism; phospholipid metabolism. Catalyzes the transfer of an acyl group from acyl-phosphate (acyl-PO(4)) to glycerol-3-phosphate (G3P) to form lysophosphatidic acid (LPA). This enzyme utilizes acyl-phosphate as fatty acyl donor, but not acyl-CoA or acyl-ACP. The polypeptide is Glycerol-3-phosphate acyltransferase 1 (Thermotoga maritima (strain ATCC 43589 / DSM 3109 / JCM 10099 / NBRC 100826 / MSB8)).